Consider the following 246-residue polypeptide: 1-(5-phosphoribosyl)-5-[(5-phosphoribosylamino)methylideneamino] imidazole-4-carboxamide isomerase (246 aa).

Residue D7 is the Proton acceptor of the active site. D129 (proton donor) is an active-site residue.

This sequence belongs to the HisA/HisF family.

The protein localises to the cytoplasm. The enzyme catalyses 1-(5-phospho-beta-D-ribosyl)-5-[(5-phospho-beta-D-ribosylamino)methylideneamino]imidazole-4-carboxamide = 5-[(5-phospho-1-deoxy-D-ribulos-1-ylimino)methylamino]-1-(5-phospho-beta-D-ribosyl)imidazole-4-carboxamide. It functions in the pathway amino-acid biosynthesis; L-histidine biosynthesis; L-histidine from 5-phospho-alpha-D-ribose 1-diphosphate: step 4/9. In Shewanella sediminis (strain HAW-EB3), this protein is 1-(5-phosphoribosyl)-5-[(5-phosphoribosylamino)methylideneamino] imidazole-4-carboxamide isomerase.